Consider the following 406-residue polypeptide: Dihydroorotase, mitochondrial (406 aa).

The N-terminal 41 residues, Met-1–Lys-41, are a transit peptide targeting the mitochondrion. Residues His-69, His-71, Lys-155, His-193, His-231, and Asp-305 each coordinate Zn(2+). Lys-155 is subject to N6-carboxylysine.

The protein belongs to the metallo-dependent hydrolases superfamily. DHOase family. Class II DHOase subfamily. The cofactor is Zn(2+).

Its subcellular location is the mitochondrion. The catalysed reaction is (S)-dihydroorotate + H2O = N-carbamoyl-L-aspartate + H(+). Its pathway is pyrimidine metabolism; UMP biosynthesis via de novo pathway; (S)-dihydroorotate from bicarbonate: step 3/3. This is Dihydroorotase, mitochondrial (PYRC) from Oryza sativa subsp. japonica (Rice).